Consider the following 2488-residue polypeptide: Neuron navigator 2 (2488 aa).

A Calponin-homology (CH) domain is found at 85–192 (GFDTQIYTDW…LFFSLSRYKQ (108 aa)). Composition is skewed to low complexity over residues 194-204 (QQQPQKQHLSS), 221-247 (QAGT…PHQQ), and 255-267 (QSSA…SQSK). Disordered regions lie at residues 194–675 (QQQP…GSNT) and 706–727 (TEGN…SHFT). Over residues 299–315 (GGSTTANNRRSQSFNNY) the composition is skewed to polar residues. Residues 356 to 369 (SGSSSTPTNCSTSS) show a composition bias toward low complexity. Positions 384-396 (KSLSVKHSATVSM) are enriched in polar residues. Over residues 401–410 (PPGPEAPRPT) the composition is skewed to pro residues. Residues 492–506 (RTFSRALTNKKSSLK) are compositionally biased toward polar residues. The stretch at 498–531 (LTNKKSSLKGNEKEKEKQQREKDKEKSKDLAKRA) forms a coiled coil. Over residues 507–547 (GNEKEKEKQQREKDKEKSKDLAKRASVTERLDLKEEPKEDP) the composition is skewed to basic and acidic residues. Residues 592–606 (MKSMPGKSPSAPAPS) show a composition bias toward low complexity. Over residues 615-626 (GKLSSGLPQQKP) the composition is skewed to polar residues. Composition is skewed to low complexity over residues 633–642 (SSSSSSLASS) and 657–675 (SSQT…GSNT). Residues 706–719 (TEGNVTAESSSTGV) are compositionally biased toward polar residues. Positions 743-771 (EARRLRTVKNIADLRQNLEETMSSLRGTQ) form a coiled coil. 9 disordered regions span residues 804–824 (LSWR…PSMG), 939–1151 (LGLG…QSGS), 1177–1200 (KSSA…NQDD), 1213–1283 (YRSL…SDNE), 1295–1338 (PAAQ…PIAT), 1355–1412 (MTQQ…TNAS), 1440–1460 (SLSS…ASSK), 1473–1560 (VKTT…VTSP), and 1591–1629 (SLSN…SFRD). A compositionally biased stretch (low complexity) spans 939 to 985 (LGLGDADSWDDSSSVSSGISDTIDNLSTDDINTSSSISSYANTPASS). The span at 1091–1102 (KTDDAKVSEKGR) shows a compositional bias: basic and acidic residues. The segment covering 1130-1142 (PSSSRTPTANANS) has biased composition (polar residues). A compositionally biased stretch (low complexity) spans 1220 to 1245 (SKSNSRNGAGNRSSTSSIDSNISSKS). Residues 1299–1309 (PVSSPAQTSLQ) are compositionally biased toward polar residues. 2 stretches are compositionally biased toward low complexity: residues 1363–1380 (SPSG…PLYS) and 1388–1404 (SPLA…PSNS). The segment covering 1440 to 1456 (SLSSGGVPSHNSSTGLI) has biased composition (polar residues). The segment covering 1477–1489 (LSESPLSSPAASP) has biased composition (low complexity). Phosphoserine occurs at positions 1480, 1484, and 1488. 2 stretches are compositionally biased toward basic and acidic residues: residues 1498–1510 (RKQD…DRNT) and 1526–1535 (TQEDAKEWLR). The segment covering 1549-1560 (SPFSSGSSVTSP) has biased composition (low complexity). Positions 1686-1773 (EEKCQSEIRK…AAAQAAINGV (88 aa)) form a coiled coil. Disordered stretches follow at residues 1790–1887 (ADLR…LRNS) and 1951–1985 (AEND…MGLS). Polar residues-rich tracts occupy residues 1800–1820 (SDSV…SNIE), 1875–1887 (NGST…LRNS), and 1959–1985 (ESQG…MGLS). A coiled-coil region spans residues 1897 to 1964 (MDSEAETVMQ…RLKSESQGSG (68 aa)). Ser-1977 is modified (phosphoserine). An ATP-binding site is contributed by 2157 to 2164 (GPSGTGKT). A disordered region spans residues 2423-2488 (DGYSMPREGS…ILDSSLESTL (66 aa)). The span at 2460 to 2473 (YSSPQSYDSDSNSN) shows a compositional bias: low complexity.

This sequence belongs to the Nav/unc-53 family. As to expression, highly expressed in the brain, kidney and liver. Also expressed in the thyroid, mammary gland, spinal cord, heart, placenta and lung. Abundantly expressed in colon cancers.

The protein localises to the nucleus. The catalysed reaction is ATP + H2O = ADP + phosphate + H(+). Its function is as follows. Possesses 3' to 5' helicase activity and exonuclease activity. Involved in neuronal development, specifically in the development of different sensory organs. This Homo sapiens (Human) protein is Neuron navigator 2 (NAV2).